The chain runs to 127 residues: Glycine cleavage system H protein (127 aa).

In terms of domain architecture, Lipoyl-binding spans 24 to 105 (AALVGITDFA…YGEGWLVKIR (82 aa)). Residue Lys65 is modified to N6-lipoyllysine.

This sequence belongs to the GcvH family. The glycine cleavage system is composed of four proteins: P, T, L and H. Requires (R)-lipoate as cofactor.

In terms of biological role, the glycine cleavage system catalyzes the degradation of glycine. The H protein shuttles the methylamine group of glycine from the P protein to the T protein. This Chlorobium limicola (strain DSM 245 / NBRC 103803 / 6330) protein is Glycine cleavage system H protein.